The sequence spans 170 residues: Adenine phosphoribosyltransferase (170 aa).

The protein belongs to the purine/pyrimidine phosphoribosyltransferase family. In terms of assembly, homodimer.

It is found in the cytoplasm. It catalyses the reaction AMP + diphosphate = 5-phospho-alpha-D-ribose 1-diphosphate + adenine. Its pathway is purine metabolism; AMP biosynthesis via salvage pathway; AMP from adenine: step 1/1. Its function is as follows. Catalyzes a salvage reaction resulting in the formation of AMP, that is energically less costly than de novo synthesis. This Pseudothermotoga lettingae (strain ATCC BAA-301 / DSM 14385 / NBRC 107922 / TMO) (Thermotoga lettingae) protein is Adenine phosphoribosyltransferase.